We begin with the raw amino-acid sequence, 78 residues long: Esculentin-2PLa (78 aa).

The signal sequence occupies residues 1-22 (MFTTKKSMLLLFFLGTISLSLC). Positions 23–39 (EEERGADEEEGDGEKLM) are excised as a propeptide. A disulfide bond links C72 and C78.

Expressed by the skin glands.

The protein localises to the secreted. Its function is as follows. Antimicrobial activity against the Gram-negative bacterium E.coli, the Gram-positive bacterium S.aureus and the yeast C.albicans. The sequence is that of Esculentin-2PLa from Lithobates palustris (Pickerel frog).